We begin with the raw amino-acid sequence, 198 residues long: Ribosomal RNA small subunit methyltransferase G (198 aa).

Residues Gly-74, Phe-79, 123-124 (IQ), and Arg-136 contribute to the S-adenosyl-L-methionine site.

Belongs to the methyltransferase superfamily. RNA methyltransferase RsmG family.

Its subcellular location is the cytoplasm. It catalyses the reaction guanosine(527) in 16S rRNA + S-adenosyl-L-methionine = N(7)-methylguanosine(527) in 16S rRNA + S-adenosyl-L-homocysteine. Specifically methylates the N7 position of guanine in position 527 of 16S rRNA. This Orientia tsutsugamushi (strain Ikeda) (Rickettsia tsutsugamushi) protein is Ribosomal RNA small subunit methyltransferase G.